The sequence spans 137 residues: Putative nucleoside diphosphate kinase (137 aa).

The ATP site is built by phenylalanine 45, arginine 73, threonine 79, arginine 90, and asparagine 100. Histidine 103 functions as the Pros-phosphohistidine intermediate in the catalytic mechanism.

It belongs to the NDK family. It depends on Mg(2+) as a cofactor.

The catalysed reaction is a 2'-deoxyribonucleoside 5'-diphosphate + ATP = a 2'-deoxyribonucleoside 5'-triphosphate + ADP. It carries out the reaction a ribonucleoside 5'-diphosphate + ATP = a ribonucleoside 5'-triphosphate + ADP. Functionally, major role in the synthesis of nucleoside triphosphates other than ATP. The ATP gamma phosphate is transferred to the NDP beta phosphate via a ping-pong mechanism, using a phosphorylated active-site intermediate. The sequence is that of Putative nucleoside diphosphate kinase (NME2P1) from Homo sapiens (Human).